An 810-amino-acid polypeptide reads, in one-letter code: Exocyst complex component 6B (810 aa).

Residues 79–118 (TELLKVRGEAQKLKNQVTDTNRKLQHEGKELVIAMEELKQ) adopt a coiled-coil conformation. The interval 258–282 (ESTSPKSEQDSGILDVEDEEDDEEV) is disordered. Positions 272-282 (DVEDEEDDEEV) are enriched in acidic residues.

This sequence belongs to the SEC15 family. The exocyst complex is composed of SEC3, SEC5, SEC6, SEC8, SEC10, SEC15, EXO70 and EXO84.

Functionally, component of the exocyst complex involved in the docking of exocytic vesicles with fusion sites on the plasma membrane. This chain is Exocyst complex component 6B (Exoc6b), found in Mus musculus (Mouse).